Reading from the N-terminus, the 263-residue chain is Phosphatidylglycerol--prolipoprotein diacylglyceryl transferase (263 aa).

4 consecutive transmembrane segments (helical) span residues 6–26, 50–70, 85–105, and 112–132; these read VIFS…VLGI, LLTA…VLIY, TWEG…AVII, and IPIF…LLLG. Residue arginine 133 participates in a 1,2-diacyl-sn-glycero-3-phospho-(1'-sn-glycerol) binding. Transmembrane regions (helical) follow at residues 169–189, 197–217, and 233–253; these read LYEA…LFYL, GATT…VEFF, and MGQL…LGAL.

Belongs to the Lgt family.

The protein localises to the cell membrane. The catalysed reaction is L-cysteinyl-[prolipoprotein] + a 1,2-diacyl-sn-glycero-3-phospho-(1'-sn-glycerol) = an S-1,2-diacyl-sn-glyceryl-L-cysteinyl-[prolipoprotein] + sn-glycerol 1-phosphate + H(+). The protein operates within protein modification; lipoprotein biosynthesis (diacylglyceryl transfer). In terms of biological role, catalyzes the transfer of the diacylglyceryl group from phosphatidylglycerol to the sulfhydryl group of the N-terminal cysteine of a prolipoprotein, the first step in the formation of mature lipoproteins. This Wolbachia pipientis subsp. Culex pipiens (strain wPip) protein is Phosphatidylglycerol--prolipoprotein diacylglyceryl transferase.